The primary structure comprises 157 residues: 17.6 kDa class I heat shock protein 3 (157 aa).

Positions 43-157 (DVAAFTNAKV…PEVKSIDISG (115 aa)) constitute a sHSP domain.

The protein belongs to the small heat shock protein (HSP20) family. In terms of assembly, may form oligomeric structures.

It localises to the cytoplasm. The chain is 17.6 kDa class I heat shock protein 3 (HSP17.6C) from Arabidopsis thaliana (Mouse-ear cress).